The following is a 234-amino-acid chain: MRTHGLTLLSLLLLAVPMLLVEAKKEGRNRRGSKASADESLALGKPGKEPRSQPTNYPIKGKFVTPDHADCRWAVTKQEEGIVLKVECTQRDNTFSCFFTGNPTSCLELHKNNAYWKQIGRNLRSQKVICGDAKSVLKTRVCRKKFPESNLKLVNSTLIRIKKPSQELMEPSPMDTVEVTTSSSPEKTQTMATKDPQCEEEDLKNQRKAALEYCGETWGSLCNFFLSMVQGSSC.

The first 23 residues, 1–23, serve as a signal peptide directing secretion; the sequence is MRTHGLTLLSLLLLAVPMLLVEA. Residues 25-59 form a disordered region; sequence KEGRNRRGSKASADESLALGKPGKEPRSQPTNYPI. Intrachain disulfides connect Cys-71/Cys-88, Cys-97/Cys-130, and Cys-106/Cys-142. N-linked (GlcNAc...) asparagine glycosylation is present at Asn-155. Residues 169–200 are disordered; that stretch reads MEPSPMDTVEVTTSSSPEKTQTMATKDPQCEE. The O-linked (GalNAc...) serine glycan is linked to Ser-172. Over residues 178-192 the composition is skewed to polar residues; the sequence is EVTTSSSPEKTQTMA. The sufficient for interaction with FGF2 and FGF2-induced effects stretch occupies residues 194–234; the sequence is KDPQCEEEDLKNQRKAALEYCGETWGSLCNFFLSMVQGSSC. Disulfide bonds link Cys-198-Cys-234 and Cys-214-Cys-222.

This sequence belongs to the fibroblast growth factor-binding protein family. As to quaternary structure, found in a complex with FGFBP1, FGF1 and FGF2. Interacts with FGF1, FGF7, FGF10, FGF22 and HSPG2. Interacts with FGF2.

Its subcellular location is the secreted. The protein resides in the extracellular space. It is found in the cell membrane. In terms of biological role, acts as a carrier protein that release fibroblast-binding factors (FGFs) from the extracellular matrix (EM) storage and thus enhance the mitogenic activity of FGFs. Enhances FGF2 signaling during tissue repair, angiogenesis and in tumor growth. This is Fibroblast growth factor-binding protein 1 (FGFBP1) from Bos taurus (Bovine).